Reading from the N-terminus, the 346-residue chain is Archaeosine synthase subunit beta (346 aa).

The region spanning 36–276 (GVQTKTLTVI…LRQAKAAHPE (241 aa)) is the Radical SAM core domain. 3 residues coordinate [4Fe-4S] cluster: cysteine 51, cysteine 59, and cysteine 62.

This sequence belongs to the radical SAM superfamily. RaSEA family. As to quaternary structure, forms a robust complex with the archaeosine synthase alpha subunit ArcS. This complex likely consists of an alpha(2)beta(2) heterotetrameric structure. The cofactor is [4Fe-4S] cluster.

The enzyme catalyses 7-N-[(5S)-5-amino-5-carboxypentyl]formamidino-7-deazaguanosine(15) in tRNA + S-adenosyl-L-methionine = archaeosine(15) in tRNA + L-1-piperideine-6-carboxylate + 5'-deoxyadenosine + L-methionine + 2 H(+). It functions in the pathway tRNA modification; archaeosine-tRNA biosynthesis. Radical SAM enzyme involved in the synthesis of archaeosine, a modified nucleoside present in the dihydrouridine loop (D-loop) of archaeal tRNAs. Catalyzes the cleavage of the C(epsilon)-N bond of the lysine moiety of q0kN15-tRNA, leading to the formation of archaeosine at position 15 in tRNAs. The chain is Archaeosine synthase subunit beta from Methanosarcina acetivorans (strain ATCC 35395 / DSM 2834 / JCM 12185 / C2A).